The primary structure comprises 423 residues: Lysosomal acid phosphatase (423 aa).

Positions 1–30 (MAGKRSGWSRAALLQLLLGVNLVVMPPTQA) are cleaved as a signal peptide. Residues 31–380 (RSLRFVTLLY…QVASGPADTE (350 aa)) are Lumenal-facing. The active-site Nucleophile is histidine 42. 6 N-linked (GlcNAc...) asparagine glycosylation sites follow: asparagine 92, asparagine 133, asparagine 167, asparagine 177, asparagine 191, and asparagine 267. Cystine bridges form between cysteine 159-cysteine 370, cysteine 212-cysteine 310, and cysteine 345-cysteine 349. The Proton donor role is filled by aspartate 287. Asparagine 322 and asparagine 331 each carry an N-linked (GlcNAc...) asparagine glycan. The helical transmembrane segment at 381–401 (VIVALAVCGSILFLLIVLLLT) threads the bilayer. Residues 402–423 (VLFRMQAQPPGYRHVADGEDHA) lie on the Cytoplasmic side of the membrane.

The protein belongs to the histidine acid phosphatase family. The membrane-bound form is converted to the soluble form by sequential proteolytic processing. First, the C-terminal cytoplasmic tail is removed. Cleavage by a lysosomal protease releases the soluble form in the lysosome lumen.

It is found in the lysosome membrane. The protein resides in the lysosome lumen. It catalyses the reaction a phosphate monoester + H2O = an alcohol + phosphate. The sequence is that of Lysosomal acid phosphatase (ACP2) from Pongo abelii (Sumatran orangutan).